The primary structure comprises 456 residues: Putative F-box/LRR-repeat protein At5g02700 (456 aa).

One can recognise an F-box domain in the interval 26-72 (ADFINYMPDDILHHILSFIPTDLAMRTSVLSRRWRHVWCETPCLDIT). 5 LRR repeats span residues 126 to 154 (VRDFTYSKTYRFPDIFYLSSSLKLLDVTL), 177 to 202 (FCQIPDESIHNILSGCPILESLTLDT), 206 to 224 (LERLDLSKSPNLRRLDINQ), 271 to 300 (LSPLTADGYQTMALEMLSKFHNVKRLTVGE), and 330 to 355 (FVRSVIPGISRLLQNSPGLKKLRPST).

The polypeptide is Putative F-box/LRR-repeat protein At5g02700 (Arabidopsis thaliana (Mouse-ear cress)).